Here is a 1279-residue protein sequence, read N- to C-terminus: Botulinum-like toxin eBoNT/J (1279 aa).

H225 is a binding site for Zn(2+). Residue E226 is part of the active site. Zn(2+)-binding residues include H229 and E269. A disulfide bond links C424 and C438. Residues 435-843 (LSSCIEILED…RLTSLPVFNL (409 aa)) are translocation domain (TD). Positions 476-525 (ADTILDSTLSNYDFSKEINFTSTVPIITVEDPLETDEDVPVISEDRTVYV) are belt; not required for channel formation. Residues 860–1080 (IDIQDSEVLN…EVNRLYWKYF (221 aa)) form an N-terminus of receptor binding domain (N-RBD) region. The interval 1081–1279 (EGSYLRDVWG…IPVDEGWKED (199 aa)) is C-terminus of receptor binding domain (C-RBD). Residues 1250-1253 (SAWY) carry the Host ganglioside-binding motif motif.

It belongs to the peptidase M27 family. In terms of assembly, might be a disulfide-linked heterodimer of a light chain (LC) and heavy chain (HC). It depends on Zn(2+) as a cofactor.

It localises to the secreted. It is found in the host cytoplasm. The protein localises to the host cytosol. The protein resides in the host cell membrane. Its subcellular location is the host cytoplasmic vesicle membrane. It carries out the reaction Limited hydrolysis of proteins of the neuroexocytosis apparatus, synaptobrevins, SNAP25 or syntaxin. No detected action on small molecule substrates.. Functionally, strongly resembles a botulinum-type toxin, with the appropriate domains and residues to have proteolytic function, although its C-terminus (which binds to a eukaryotic host cell) is different enough from clostrial botulinum toxins that it might bind another cell target. Might be a precursor of a toxin that binds to an unknown eukaryotic cell receptor(s), and be taken up into the host cell via the endocytic pathway. When the pH of the putative toxin-containing endosome drops a structural rearrangement occurs so that the N-terminus of the heavy chain forms pores that allows the light chain to translocate into the cytosol. Once in the cytosol the disulfide bond linking the 2 subunits is reduced and light chain cleaves its target protein. The polypeptide is Botulinum-like toxin eBoNT/J (Enterococcus sp. (strain 3G1_DIV0629)).